Reading from the N-terminus, the 324-residue chain is MKSALCSRFFILLPWILIVIIMLDVDPRRPAPQLTSRPYFSPHAVGCGGSRVPLRRSSPGRDAAEKRNESRPQLQPEPRLPTIYAITPTYSRPVQKAELTRLANTFRQVAQLHWILVEDRATRSELVSSFLARAGLPNTHLHVPTPRRYKRPWLPRATEQRNAGLAWLRQRHQHQSAQPGVLFFADDDNTYSLELFQEMRTTRKVSVWPVGLVGGRRYERPLVKNGKVVGWYTGWREDRPFAIDMAGFAVSLQVILSNPKAVFKRRGSQPGMQESDFLKQITTVEELEPKASNCTKVLVWHTRTEKVNLANEPKYHLDTVNIEV.

Topologically, residues 1-2 are cytoplasmic; it reads MK. A helical; Signal-anchor for type II membrane protein membrane pass occupies residues 3–23; it reads SALCSRFFILLPWILIVIIML. At 24-324 the chain is on the lumenal side; the sequence is DVDPRRPAPQ…YHLDTVNIEV (301 aa). The segment at 50-78 is disordered; sequence SRVPLRRSSPGRDAAEKRNESRPQLQPEP. Asn68 carries an N-linked (GlcNAc...) asparagine glycan. UDP-alpha-D-glucuronate contacts are provided by residues 88 to 90, Asp119, Arg156, Arg161, and 186 to 188; these read PTY and DDD. A Mn(2+)-binding site is contributed by Asp188. The interaction with galactose moiety of substrate glycoprotein stretch occupies residues 235–244; it reads WREDRPFAID. The Proton donor/acceptor role is filled by Glu274. Asn293 carries N-linked (GlcNAc...) asparagine glycosylation. 301–303 is a binding site for UDP-alpha-D-glucuronate; sequence HTR.

It belongs to the glycosyltransferase 43 family. As to quaternary structure, homodimer. The cofactor is Mn(2+). As to expression, expressed in brain, but not in liver and kidney.

The protein resides in the golgi apparatus membrane. The catalysed reaction is 3-O-(beta-D-galactosyl-(1-&gt;3)-beta-D-galactosyl-(1-&gt;4)-beta-D-xylosyl)-L-seryl-[protein] + UDP-alpha-D-glucuronate = 3-O-(beta-D-GlcA-(1-&gt;3)-beta-D-Gal-(1-&gt;3)-beta-D-Gal-(1-&gt;4)-beta-D-Xyl)-L-seryl-[protein] + UDP + H(+). Its pathway is protein modification; protein glycosylation. Its function is as follows. Involved in the biosynthesis of L2/HNK-1 carbohydrate epitope on both glycolipids and glycoproteins. The chain is Galactosylgalactosylxylosylprotein 3-beta-glucuronosyltransferase 2 (B3gat2) from Mus musculus (Mouse).